Consider the following 274-residue polypeptide: Carboxy-S-adenosyl-L-methionine synthase (274 aa).

Residues Tyr-59, 93-95 (GCS), 149-150 (DI), Asn-164, and Arg-231 each bind S-adenosyl-L-methionine.

It belongs to the class I-like SAM-binding methyltransferase superfamily. Cx-SAM synthase family. Homodimer.

It carries out the reaction prephenate + S-adenosyl-L-methionine = carboxy-S-adenosyl-L-methionine + 3-phenylpyruvate + H2O. Catalyzes the conversion of S-adenosyl-L-methionine (SAM) to carboxy-S-adenosyl-L-methionine (Cx-SAM). The chain is Carboxy-S-adenosyl-L-methionine synthase from Psychrobacter sp. (strain PRwf-1).